Here is a 310-residue protein sequence, read N- to C-terminus: Transcription factor LRL2 (310 aa).

Low complexity-rich tracts occupy residues 1–20 (MNSSSLLTPSSSPSPHLQSP) and 104–126 (QTQTQSQATASATTGGATAQPQT). Disordered stretches follow at residues 1-23 (MNSSSLLTPSSSPSPHLQSPATF) and 95-143 (FHLP…PHSI). The basic motif; degenerate stretch occupies residues 136 to 149 (QATDPHSIAERLRR). The 50-residue stretch at 136 to 185 (QATDPHSIAERLRRERIAERMKSLQELVPNGNKTDKASMLDEIIDYVKFL) folds into the bHLH domain. The helix-loop-helix motif stretch occupies residues 150 to 185 (ERIAERMKSLQELVPNGNKTDKASMLDEIIDYVKFL). The segment at 203–225 (ASSQISEDAGGSHENTSSSGEAK) is disordered.

In terms of assembly, homodimer. Expressed constitutively in roots, leaves, stems, and flowers.

The protein resides in the nucleus. Its function is as follows. Transcription factor that regulates the development of root hairs. Transcription factor that regulates the development of sperm cells. The chain is Transcription factor LRL2 from Arabidopsis thaliana (Mouse-ear cress).